Here is a 341-residue protein sequence, read N- to C-terminus: BBSome complex member BBS5 (341 aa).

Belongs to the BBS5 family. As to quaternary structure, part of BBSome complex, that contains BBS1, BBS2, BBS4, BBS5, BBS7, BBS8/TTC8, BBS9 and BBIP10. Binds to phosphoinositides. Interacts with CCDC28B. Interacts with SMO; the interaction is indicative for the association of SMO with the BBsome complex to facilitate ciliary localization of SMO. Interacts with PKD1. Interacts with DLEC1.

It is found in the cell projection. It localises to the cilium membrane. The protein localises to the cytoplasm. Its subcellular location is the cytoskeleton. The protein resides in the cilium basal body. It is found in the microtubule organizing center. It localises to the centrosome. The protein localises to the centriolar satellite. Functionally, the BBSome complex is thought to function as a coat complex required for sorting of specific membrane proteins to the primary cilia. The BBSome complex is required for ciliogenesis but is dispensable for centriolar satellite function. This ciliogenic function is mediated in part by the Rab8 GDP/GTP exchange factor, which localizes to the basal body and contacts the BBSome. Rab8(GTP) enters the primary cilium and promotes extension of the ciliary membrane. Firstly the BBSome associates with the ciliary membrane and binds to RAB3IP/Rabin8, the guanosyl exchange factor (GEF) for Rab8 and then the Rab8-GTP localizes to the cilium and promotes docking and fusion of carrier vesicles to the base of the ciliary membrane. The BBSome complex, together with the LTZL1, controls SMO ciliary trafficking and contributes to the sonic hedgehog (SHH) pathway regulation. Required for BBSome complex ciliary localization but not for the proper complex assembly. This is BBSome complex member BBS5 (BBS5) from Homo sapiens (Human).